The chain runs to 473 residues: Photosystem II CP43 reaction center protein (473 aa).

Positions 1–14 (MKNLYSLRRFYHVE) are excised as a propeptide. T15 is subject to N-acetylthreonine. T15 carries the phosphothreonine modification. 5 helical membrane passes run 69-93 (LFEV…PHLA), 134-155 (LIGP…KDKN), 178-200 (KARY…RVIT), 255-275 (KPFG…LSYS), and 291-312 (WFNN…ASQA). E367 serves as a coordination point for [CaMn4O5] cluster. Residues 447–471 (RARAAAAGFEKGIDRDTEPTLFMRP) form a helical membrane-spanning segment.

The protein belongs to the PsbB/PsbC family. PsbC subfamily. As to quaternary structure, PSII is composed of 1 copy each of membrane proteins PsbA, PsbB, PsbC, PsbD, PsbE, PsbF, PsbH, PsbI, PsbJ, PsbK, PsbL, PsbM, PsbT, PsbX, PsbY, PsbZ, Psb30/Ycf12, at least 3 peripheral proteins of the oxygen-evolving complex and a large number of cofactors. It forms dimeric complexes. Requires Binds multiple chlorophylls and provides some of the ligands for the Ca-4Mn-5O cluster of the oxygen-evolving complex. It may also provide a ligand for a Cl- that is required for oxygen evolution. PSII binds additional chlorophylls, carotenoids and specific lipids. as cofactor.

It localises to the plastid. Its subcellular location is the chloroplast thylakoid membrane. In terms of biological role, one of the components of the core complex of photosystem II (PSII). It binds chlorophyll and helps catalyze the primary light-induced photochemical processes of PSII. PSII is a light-driven water:plastoquinone oxidoreductase, using light energy to abstract electrons from H(2)O, generating O(2) and a proton gradient subsequently used for ATP formation. In Nephroselmis olivacea (Green alga), this protein is Photosystem II CP43 reaction center protein.